Here is a 342-residue protein sequence, read N- to C-terminus: Isopentenyl-diphosphate delta-isomerase (342 aa).

Substrate is bound at residue 6–7 (RK). FMN is bound by residues Ser63, 64–66 (SMT), Ser94, and Asn122. 94 to 96 (SMR) contacts substrate. Gln157 contributes to the substrate binding site. Residue Glu158 coordinates Mg(2+). Residues Lys189, Thr219, 269 to 271 (GLK), and 290 to 291 (AG) contribute to the FMN site.

It belongs to the IPP isomerase type 2 family. In terms of assembly, homooctamer. Dimer of tetramers. Requires FMN as cofactor. It depends on NADPH as a cofactor. Mg(2+) serves as cofactor.

The protein resides in the cytoplasm. It catalyses the reaction isopentenyl diphosphate = dimethylallyl diphosphate. Functionally, involved in the biosynthesis of isoprenoids. Catalyzes the 1,3-allylic rearrangement of the homoallylic substrate isopentenyl (IPP) to its allylic isomer, dimethylallyl diphosphate (DMAPP). This chain is Isopentenyl-diphosphate delta-isomerase, found in Rickettsia bellii (strain RML369-C).